The following is a 488-amino-acid chain: Facilitated trehalose transporter Tret1-2 homolog (488 aa).

Topologically, residues 1–28 (MKILMRADTHVSYSVPAEGPKANFTFSQ) are cytoplasmic. A helical transmembrane segment spans residues 29–49 (VLAALSVSLCSLVVGFVSAYT). Residues 50 to 72 (SPALVSMTDRTITSFEVTKDAGS) are Extracellular-facing. A helical membrane pass occupies residues 73-93 (WVGGIMPLAALAGGITGGPLI). The Cytoplasmic segment spans residues 94–105 (EYLGRRTTILAT). The chain crosses the membrane as a helical span at residues 106 to 126 (AVPFIVSSLLIACAVNVIMIL). Residues 127 to 129 (CGR) are Extracellular-facing. Residues 130–150 (FLTGFCVGIASLSLPVYLGET) form a helical membrane-spanning segment. Over 151-160 (LQPEVRGTLG) the chain is Cytoplasmic. Residues 161 to 181 (LLPTALGNIGILVCYVAGSFM) form a helical membrane-spanning segment. Asparagine 182 carries N-linked (GlcNAc...) asparagine glycosylation. Residues 182–184 (NWS) lie on the Extracellular side of the membrane. The helical transmembrane segment at 185–205 (MLAFLGAALPVPFLILMIIIP) threads the bilayer. Topologically, residues 206-268 (ETPRWFVNRG…ELFKRINLKP (63 aa)) are cytoplasmic. A helical membrane pass occupies residues 269 to 289 (LSISLGLMFFQQFSGINAVIF). Over 290–305 (YTVQIFKDAGSTIDSN) the chain is Extracellular. A helical transmembrane segment spans residues 306-326 (LCTIIVGIVNFFATFMGILLI). The Cytoplasmic portion of the chain corresponds to 327–332 (DRLGRK). Residues 333–353 (ILLYISDIAMILTLSILGGFF) form a helical membrane-spanning segment. The Extracellular portion of the chain corresponds to 354 to 372 (YCKAHGPDVSHLGWLPLTC). A helical transmembrane segment spans residues 373 to 393 (FVIYILGFSLGFGPIPWLMMG). Residues 394 to 402 (EILPAKIRG) lie on the Cytoplasmic side of the membrane. A helical transmembrane segment spans residues 403–423 (PAASVVTAFNWFCTFVVTKTF). Residues 424 to 433 (QDLTVAMGAH) are Extracellular-facing. A helical transmembrane segment spans residues 434 to 454 (GAFWLFGVVCIVGLFFVIICV). At 455–488 (PETRGKSLEEIERKMMGRVPISAVVNIKPFSFNM) the chain is on the cytoplasmic side.

Belongs to the major facilitator superfamily. Sugar transporter (TC 2.A.1.1) family. Trehalose transporter subfamily.

It localises to the cell membrane. Functionally, fails to transport trehalose. The chain is Facilitated trehalose transporter Tret1-2 homolog from Drosophila simulans (Fruit fly).